Here is a 149-residue protein sequence, read N- to C-terminus: Prefoldin subunit alpha (149 aa).

The protein belongs to the prefoldin subunit alpha family. Heterohexamer of two alpha and four beta subunits.

It localises to the cytoplasm. Functionally, molecular chaperone capable of stabilizing a range of proteins. Seems to fulfill an ATP-independent, HSP70-like function in archaeal de novo protein folding. In Methanospirillum hungatei JF-1 (strain ATCC 27890 / DSM 864 / NBRC 100397 / JF-1), this protein is Prefoldin subunit alpha.